A 189-amino-acid chain; its full sequence is Segregation and condensation protein B (189 aa).

This sequence belongs to the ScpB family. As to quaternary structure, homodimer. Homodimerization may be required to stabilize the binding of ScpA to the Smc head domains. Component of a cohesin-like complex composed of ScpA, ScpB and the Smc homodimer, in which ScpA and ScpB bind to the head domain of Smc. The presence of the three proteins is required for the association of the complex with DNA.

The protein resides in the cytoplasm. Functionally, participates in chromosomal partition during cell division. May act via the formation of a condensin-like complex containing Smc and ScpA that pull DNA away from mid-cell into both cell halves. The chain is Segregation and condensation protein B from Clostridium tetani (strain Massachusetts / E88).